A 192-amino-acid polypeptide reads, in one-letter code: Protein FAM169BP (192 aa).

A disordered region spans residues tyrosine 121–proline 192. Positions glutamate 159–alanine 177 are enriched in acidic residues.

It belongs to the FAM169 family.

The chain is Protein FAM169BP from Homo sapiens (Human).